Consider the following 127-residue polypeptide: Aspartate 1-decarboxylase (127 aa).

Residue serine 25 is the Schiff-base intermediate with substrate; via pyruvic acid of the active site. Serine 25 carries the pyruvic acid (Ser) modification. Substrate is bound at residue threonine 57. Tyrosine 58 (proton donor) is an active-site residue. 73–75 lines the substrate pocket; the sequence is GSA.

It belongs to the PanD family. Heterooctamer of four alpha and four beta subunits. The cofactor is pyruvate. In terms of processing, is synthesized initially as an inactive proenzyme, which is activated by self-cleavage at a specific serine bond to produce a beta-subunit with a hydroxyl group at its C-terminus and an alpha-subunit with a pyruvoyl group at its N-terminus.

It is found in the cytoplasm. The enzyme catalyses L-aspartate + H(+) = beta-alanine + CO2. It participates in cofactor biosynthesis; (R)-pantothenate biosynthesis; beta-alanine from L-aspartate: step 1/1. Catalyzes the pyruvoyl-dependent decarboxylation of aspartate to produce beta-alanine. The chain is Aspartate 1-decarboxylase from Laribacter hongkongensis (strain HLHK9).